The following is a 55-amino-acid chain: Large ribosomal subunit protein bL33 (55 aa).

This sequence belongs to the bacterial ribosomal protein bL33 family.

In Rhizorhabdus wittichii (strain DSM 6014 / CCUG 31198 / JCM 15750 / NBRC 105917 / EY 4224 / RW1) (Sphingomonas wittichii), this protein is Large ribosomal subunit protein bL33.